Reading from the N-terminus, the 435-residue chain is Glucoside xylosyltransferase 1 (435 aa).

At 1-6 (MRRYLR) the chain is on the cytoplasmic side. The chain crosses the membrane as a helical; Signal-anchor for type II membrane protein span at residues 7–29 (VVGLCLACGFCSLLYAFSQLAVS). Residues 30 to 435 (LEEGAAVGRR…NRYDTPPKER (406 aa)) are Lumenal-facing. Residues Asn168 and Asn232 are each glycosylated (N-linked (GlcNAc...) asparagine).

It belongs to the glycosyltransferase 8 family.

The protein localises to the membrane. The enzyme catalyses 3-O-(beta-D-glucosyl)-L-seryl-[EGF-like domain protein] + UDP-alpha-D-xylose = 3-O-[alpha-D-xylosyl-(1-&gt;3)-beta-D-glucosyl]-L-seryl-[EGF-like domain protein] + UDP + H(+). Glycosyltransferase which elongates the O-linked glucose attached to EGF-like repeats in the extracellular domain of Notch proteins by catalyzing the addition of xylose. The chain is Glucoside xylosyltransferase 1 (Gxylt1) from Rattus norvegicus (Rat).